The sequence spans 204 residues: Rho GDP-dissociation inhibitor 1 (204 aa).

The interval 1–36 is disordered; that stretch reads MAEQEPTAEQLAQIAAENEEDEHSVNYKPPAQKSIQ. A2 bears the N-acetylalanine mark. S34 bears the Phosphoserine mark. K43 carries the post-translational modification N6-acetyllysine. S47 is modified (phosphoserine). Residues K105 and K127 each carry the N6-acetyllysine modification. Glycyl lysine isopeptide (Lys-Gly) (interchain with G-Cter in SUMO1); alternate cross-links involve residues K138 and K141. Residues K138 and K141 each participate in a glycyl lysine isopeptide (Lys-Gly) (interchain with G-Cter in SUMO2); alternate cross-link. An N6-acetyllysine; alternate modification is found at K141. An N6-succinyllysine; alternate modification is found at K141. K178 is subject to N6-acetyllysine.

Belongs to the Rho GDI family. Monomer. Interacts with FER. Interacts with PLXNB3. Forms a heterodimer with RAC1. Interacts with RHOA, the affinity is increased by three orders of magnitude when RHOA is prenylated. Interacts with PSMD10; the interaction increases ARHGDIA association with RHOA, leading to ARHGDIA-mediated inactivation of RHOA and ROCK and prolonged AKT activation. Interacts with KANK2; the interaction is direct and may regulate the interaction of ARHGDIA with RHOA, RAC1 and CDC42. Interacts with RHOC. Interacts with CDC42. Interacts with NGFR (via death domain); NGFR binding decreases the affinity for RHOA. In terms of tissue distribution, in kidney glomerulus, expressed in podocytes and mesangial cells.

It localises to the cytoplasm. Controls Rho proteins homeostasis. Regulates the GDP/GTP exchange reaction of the Rho proteins by inhibiting the dissociation of GDP from them, and the subsequent binding of GTP to them. Retains Rho proteins such as CDC42, RAC1 and RHOA in an inactive cytosolic pool, regulating their stability and protecting them from degradation. Actively involved in the recycling and distribution of activated Rho GTPases in the cell, mediates extraction from membranes of both inactive and activated molecules due its exceptionally high affinity for prenylated forms. Through the modulation of Rho proteins, may play a role in cell motility regulation. In glioma cells, inhibits cell migration and invasion by mediating the signals of SEMA5A and PLXNB3 that lead to inactivation of RAC1. This chain is Rho GDP-dissociation inhibitor 1 (Arhgdia), found in Mus musculus (Mouse).